The following is a 147-amino-acid chain: Putative 2'-deoxynucleoside 5'-phosphate N-hydrolase 1 (147 aa).

Substrate is bound by residues 10-16 (YFCGSIR), Tyr25, His42, Glu90, and 114-116 (SAM).

Belongs to the 2'-deoxynucleoside 5'-phosphate N-hydrolase 1 family. Monomer and homodimer.

The protein localises to the cytoplasm. The protein resides in the nucleus. It carries out the reaction a pyrimidine 2'-deoxyribonucleoside 5'-phosphate + H2O = a pyrimidine nucleobase + 2-deoxy-D-ribose 5-phosphate. The enzyme catalyses a purine 2'-deoxyribonucleoside 5'-phosphate + H2O = a purine nucleobase + 2-deoxy-D-ribose 5-phosphate. Functionally, catalyzes the cleavage of the N-glycosidic bond of deoxyribonucleoside 5'-monophosphates to yield deoxyribose 5-phosphate and a purine or pyrimidine base. The polypeptide is Putative 2'-deoxynucleoside 5'-phosphate N-hydrolase 1 (Nematostella vectensis (Starlet sea anemone)).